The chain runs to 241 residues: Ribonuclease 3 (241 aa).

Residues 16 to 144 (HAEFEKKINY…VIGAIFQDGG (129 aa)) enclose the RNase III domain. Glutamate 57 is a Mg(2+) binding site. Residues aspartate 61 and glutamate 133 contribute to the active site. Residue glutamate 133 participates in Mg(2+) binding. In terms of domain architecture, DRBM spans 171–240 (DAKSRLQEIL…AALAIKKIES (70 aa)).

The protein belongs to the ribonuclease III family. As to quaternary structure, homodimer. It depends on Mg(2+) as a cofactor.

It localises to the cytoplasm. The catalysed reaction is Endonucleolytic cleavage to 5'-phosphomonoester.. In terms of biological role, digests double-stranded RNA. Involved in the processing of primary rRNA transcript to yield the immediate precursors to the large and small rRNAs (23S and 16S). Processes some mRNAs, and tRNAs when they are encoded in the rRNA operon. Processes pre-crRNA and tracrRNA of type II CRISPR loci if present in the organism. The chain is Ribonuclease 3 from Desulfotalea psychrophila (strain LSv54 / DSM 12343).